The chain runs to 359 residues: Magnesium transporter NIPA2 (359 aa).

The Extracellular segment spans residues 1 to 9; that stretch reads MSLGRGKYD. The helical transmembrane segment at 10–30 threads the bilayer; that stretch reads FYIGLGLAMTSSIFIGGSFIL. Over 31–56 the chain is Cytoplasmic; the sequence is KKKGLLRLARKGSMRAGQGGHAYLKE. A helical membrane pass occupies residues 57–77; that stretch reads WLWWAGLLSMGAGEVANFAAY. Residue Ala-78 is a topological domain, extracellular. The chain crosses the membrane as a helical span at residues 79-99; that stretch reads FAPATLVTPLGALSVLVSAIL. At 100–107 the chain is on the cytoplasmic side; the sequence is SSYFLNER. The chain crosses the membrane as a helical span at residues 108-128; that stretch reads LNLHGKIGCLLSILGSTVMVI. The Extracellular segment spans residues 129 to 149; sequence HAPKEEEIETLNEMSHKLGDP. Residues 150–170 traverse the membrane as a helical segment; it reads GFVVFATFVVIVALIFIFVVG. Residues 171-175 lie on the Cytoplasmic side of the membrane; the sequence is PRHGQ. Residues 176-196 form a helical membrane-spanning segment; sequence TNILVYITICSVIGAFSVSCV. Over 197–215 the chain is Extracellular; sequence KGLGIAIKELLAGKPVLQH. Residues 216 to 236 traverse the membrane as a helical segment; that stretch reads PLAWILLFSLVVCVSTQINYL. Topologically, residues 237 to 246 are cytoplasmic; sequence NRALDIFNTS. Residues 247–267 form a helical membrane-spanning segment; that stretch reads IVTPIYYVFFTTSVLTCSAIL. The Extracellular portion of the chain corresponds to 268 to 278; that stretch reads FKEWQDMPVDD. Residues 279–299 form a helical membrane-spanning segment; it reads VIGTLSGFFTIIVGIFLLHAF. The Cytoplasmic segment spans residues 300–359; it reads KDVSFSLASLPVSFRKDEKAMNGNLSSMYEVLNNNEDDLPCGIEHTGENISRRNGNLPSF.

Belongs to the NIPA family. Widely expressed. Expressed at high levels in the kidney.

The protein resides in the cell membrane. It is found in the early endosome. It catalyses the reaction Mg(2+)(in) = Mg(2+)(out). In terms of biological role, acts as a selective Mg(2+) transporter. The chain is Magnesium transporter NIPA2 (Nipa2) from Mus musculus (Mouse).